A 214-amino-acid chain; its full sequence is Ribonuclease HII (214 aa).

The region spanning 27 to 214 (SVVAGIDEAG…SPIKQMCAIV (188 aa)) is the RNase H type-2 domain. Residues D33, E34, and D126 each coordinate a divalent metal cation.

This sequence belongs to the RNase HII family. It depends on Mn(2+) as a cofactor. Mg(2+) is required as a cofactor.

The protein localises to the cytoplasm. It catalyses the reaction Endonucleolytic cleavage to 5'-phosphomonoester.. Endonuclease that specifically degrades the RNA of RNA-DNA hybrids. This Chlamydia pneumoniae (Chlamydophila pneumoniae) protein is Ribonuclease HII (rnhB).